The following is a 1115-amino-acid chain: MRLLRRNMLVLTLLVCVFSSIISCSIPLSSRTSRRQIVEDEVASTKKLNFNYGVDKNINSPIPAPRTTEGLPNMKLSSYPTPNLLNTADNRRANKKGRRAANSISVPYLENRSLNELSLSDILIAADVEGGLHAVDRRNGHIIWSIEPENFQPLIEIQEPSRLETYETLIIEPFGDGNIYYFNAHQGLQKLPLSIRQLVSTSPLHLKTNIVVNDSGKIVEDEKVYTGSMRTIMYTINMLNGEIISAFGPGSKNGYFGSQSVDCSPEEKIKLQECENMIVIGKTIFELGIHSYDGASYNVTYSTWQQNVLDVPLALQNTFSKDGMCIAPFRDKSLLASDLDFRIARWVSPTFPGIIVGLFDVFNDLRTNENILVPHPFNPGDHESISSNKVYLDQTSNLSWFALSSQNFPSLVESAPISRYASSDRWRVSSIFEDETLFKNAIMGVHQIYNNEYDHLYENYEKTNSLDTTHKYPPLMIDSSVDTTDLHQNNEMNSLKEYMSPEDLEAYRKKIHEQISRELDEKNQNSLLLKFGSLVYRIIETGVFLLLFLIFCAILQRFKILPPLYVLLSKIGFMPEKEIPIVESKSLNCPSSSENVTKPFDMKSGKQVVFEGAVNDGSLKSEKDNDDADEDDEKSLDLTTEKKKRKRGSRGGKKGRKSRIANIPNFEQSLKNLVVSEKILGYGSSGTVVFQGSFQGRPVAVKRMLIDFCDIALMEIKLLTESDDHPNVIRYYCSETTDRFLYIALELCNLNLQDLVESKNVSDENLKLQKEYNPISLLRQIASGVAHLHSLKIIHRDLKPQNILVSTSSRFTADQQTGAENLRILISDFGLCKKLDSGQSSFRTNLNNPSGTSGWRAPELLEESNNLQCQVETEHSSSRHTVVSSDSFYDPFTKRRLTRSIDIFSMGCVFYYILSKGKHPFGDKYSRESNIIRGIFSLDEMKCLHDRSLIAEATDLISQMIDHDPLKRPTAMKVLRHPLFWPKSKKLEFLLKVSDRLEIENRDPPSALLMKFDAGSDFVIPSGDWTVKFDKTFMDNLERYRKYHSSKLMDLLRALRNKYHHFMDLPEDIAELMGPVPDGFYDYFTKRFPNLLIGVYMIVKENLSDDQILREFLYS.

An N-terminal signal peptide occupies residues 1–18 (MRLLRRNMLVLTLLVCVF). Residues 19-526 (SSIISCSIPL…RELDEKNQNS (508 aa)) lie on the Lumenal side of the membrane. 4 N-linked (GlcNAc...) asparagine glycosylation sites follow: Asn111, Asn213, Asn298, and Asn397. The helical transmembrane segment at 527-555 (LLLKFGSLVYRIIETGVFLLLFLIFCAIL) threads the bilayer. At 556 to 1115 (QRFKILPPLY…DQILREFLYS (560 aa)) the chain is on the cytoplasmic side. A disordered region spans residues 617–658 (GSLKSEKDNDDADEDDEKSLDLTTEKKKRKRGSRGGKKGRKS). The span at 624-634 (DNDDADEDDEK) shows a compositional bias: acidic residues. Residues 642-658 (KKKRKRGSRGGKKGRKS) show a composition bias toward basic residues. Residues 674-980 (VVSEKILGYG…AMKVLRHPLF (307 aa)) enclose the Protein kinase domain. ADP-binding residues include Ser684, Lys702, Glu746, Cys748, and Asn751. Asp797 (proton acceptor) is an active-site residue. Residues Asn802 and Asp828 each coordinate Mg(2+). Phosphoserine; by autocatalysis is present on residues Ser840 and Ser841. Thr844 carries the phosphothreonine; by autocatalysis modification. In terms of domain architecture, KEN spans 983-1115 (KSKKLEFLLK…DQILREFLYS (133 aa)).

It belongs to the protein kinase superfamily. Ser/Thr protein kinase family. In terms of assembly, homodimer; in response to the accumulation of unfolded proteins. Dimerization of lumenal domains help position the cytoplasmic kinase domains optimally for autophosphorylation to initiate the unfolded protein response. Dimerization of the kinase domain is important for ribonuclease activity. Interacts (when phosphorylated) with PTC2; the interaction is direct and serves to attenuate the endoplasmic reticulum unfolded protein response. Mg(2+) serves as cofactor. In terms of processing, autophosphorylated mainly on serine residues; phosphorylation enables nucleotide binding by the active site.

The protein resides in the endoplasmic reticulum membrane. It carries out the reaction L-seryl-[protein] + ATP = O-phospho-L-seryl-[protein] + ADP + H(+). The catalysed reaction is L-threonyl-[protein] + ATP = O-phospho-L-threonyl-[protein] + ADP + H(+). With respect to regulation, the kinase domain is activated by trans-autophosphorylation. Kinase activity is required for activation of the endoribonuclease domain. Inactivated by dephosphorylation via recruitment of PTC2. In terms of biological role, senses unfolded proteins in the lumen of the endoplasmic reticulum via its N-terminal domain which leads to enzyme auto-activation. The active endoribonuclease domain splices HAC1 precursor mRNA to produce the mature form which then induces transcription of UPR target genes. The sequence is that of Serine/threonine-protein kinase/endoribonuclease IRE1 (IRE1) from Saccharomyces cerevisiae (strain ATCC 204508 / S288c) (Baker's yeast).